A 100-amino-acid chain; its full sequence is Transcription elongation factor A protein-like 7 (100 aa).

The segment covering 1 to 32 (MQKPCKENEGKPKCSVPKREEKRPYGEFERQQ) has biased composition (basic and acidic residues). The segment at 1-34 (MQKPCKENEGKPKCSVPKREEKRPYGEFERQQTE) is disordered. Residues 60 to 88 (EEMTREGDEMERCLEEIRGLRKKFRALHS) are a coiled coil.

The protein belongs to the TFS-II family. TFA subfamily. As to expression, highly expressed in normal and fetal brain tissues, and weakly expressed in uterus and ovary. Down-regulated in epithelial ovarian, cervical, prostate, breast, brain and lung cancer cell lines and in brain and ovarian tumors.

Its subcellular location is the nucleus. Plays a role in the negative regulation of NF-kappa-B signaling at the basal level by modulating transcriptional activity of NF-kappa-B on its target gene promoters. Associates with cyclin D1 promoter containing Myc E-box sequence and transcriptionally represses cyclin D1 expression. Regulates telomerase reverse transcriptase expression and telomerase activity in both ALT (alternative lengthening of telomeres)and telomerase-positive cell lines. This Homo sapiens (Human) protein is Transcription elongation factor A protein-like 7 (TCEAL7).